Consider the following 416-residue polypeptide: MLEQMGIAAKAASYKLALLSSGEKNRVLEKIADELEAQMESILSANVQDVEQARANGLSEAMLDRLALTPARLKAIADDVRQVCNLADPVGQVIDGGLLDSGLRLERRRVPLGVVGVIYEARPNVTVDVASLCLKTGNAVILRGGKETHRTNAATVRVIQKALKACGLPEAAVQAIDNPDRSLVNEMLRMDKYIDMLIPRGGAGLHKLCREQSTIPVITGGIGVCHIFVDSSADIAPALKIIVNAKTQRPSTCNTVETLLVHQDIAERFLPALSKQMAESGVTLHGDETVMQALHGPAKLVPLKPEELDNEFLSLDLNVVVVENMDGAIAHIREHGTQHSDAILTCDMHNAARFVNEVDSAAVYVNASTRFTDGGQFGLGAEVAVSTQKLHARGPMGLEALTTYKWIGFGDGTIRA.

It belongs to the gamma-glutamyl phosphate reductase family.

The protein resides in the cytoplasm. It carries out the reaction L-glutamate 5-semialdehyde + phosphate + NADP(+) = L-glutamyl 5-phosphate + NADPH + H(+). It participates in amino-acid biosynthesis; L-proline biosynthesis; L-glutamate 5-semialdehyde from L-glutamate: step 2/2. Functionally, catalyzes the NADPH-dependent reduction of L-glutamate 5-phosphate into L-glutamate 5-semialdehyde and phosphate. The product spontaneously undergoes cyclization to form 1-pyrroline-5-carboxylate. The sequence is that of Gamma-glutamyl phosphate reductase from Salmonella heidelberg (strain SL476).